The following is a 258-amino-acid chain: Imidazole glycerol phosphate synthase subunit HisF (258 aa).

Active-site residues include Asp-11 and Asp-130.

Belongs to the HisA/HisF family. Heterodimer of HisH and HisF.

It localises to the cytoplasm. It carries out the reaction 5-[(5-phospho-1-deoxy-D-ribulos-1-ylimino)methylamino]-1-(5-phospho-beta-D-ribosyl)imidazole-4-carboxamide + L-glutamine = D-erythro-1-(imidazol-4-yl)glycerol 3-phosphate + 5-amino-1-(5-phospho-beta-D-ribosyl)imidazole-4-carboxamide + L-glutamate + H(+). Its pathway is amino-acid biosynthesis; L-histidine biosynthesis; L-histidine from 5-phospho-alpha-D-ribose 1-diphosphate: step 5/9. Its function is as follows. IGPS catalyzes the conversion of PRFAR and glutamine to IGP, AICAR and glutamate. The HisF subunit catalyzes the cyclization activity that produces IGP and AICAR from PRFAR using the ammonia provided by the HisH subunit. The sequence is that of Imidazole glycerol phosphate synthase subunit HisF from Methylorubrum populi (strain ATCC BAA-705 / NCIMB 13946 / BJ001) (Methylobacterium populi).